Here is a 418-residue protein sequence, read N- to C-terminus: Putative competence-damage inducible protein (418 aa).

The protein belongs to the CinA family.

The polypeptide is Putative competence-damage inducible protein (Streptococcus pneumoniae (strain CGSP14)).